Reading from the N-terminus, the 801-residue chain is Mitochondrial intermediate peptidase (801 aa).

A mitochondrion-targeting transit peptide spans 1 to 41; it reads MKDQLLVPLRRRPWTCQKCLQRLQLPRHQTRRSFETAASPF. Zn(2+) is bound at residue His-564. Glu-565 is an active-site residue. Positions 568 and 571 each coordinate Zn(2+).

Belongs to the peptidase M3 family. Zn(2+) is required as a cofactor.

It is found in the mitochondrion matrix. The catalysed reaction is Release of an N-terminal octapeptide as second stage of processing of some proteins imported into the mitochondrion.. Cleaves proteins, imported into the mitochondrion, to their mature size. While most mitochondrial precursor proteins are processed to the mature form in one step by mitochondrial processing peptidase (MPP), the sequential cleavage by MIP of an octapeptide after initial processing by MPP is a required step for a subgroup of nuclear-encoded precursor proteins destined for the matrix or the inner membrane. The polypeptide is Mitochondrial intermediate peptidase (oct1) (Aspergillus fumigatus (strain ATCC MYA-4609 / CBS 101355 / FGSC A1100 / Af293) (Neosartorya fumigata)).